Consider the following 1217-residue polypeptide: Genetic suppressor element 1 (1217 aa).

Residues 1 to 155 (MKGMSHEPKS…SRSSSGGRER (155 aa)) form a disordered region. Phosphoserine is present on Ser-10. A compositionally biased stretch (polar residues) spans 15–33 (MLSTATRTTATVNPLTPSP). Low complexity-rich tracts occupy residues 43–63 (SPAT…FAAA) and 76–89 (GSSL…VSSP). 2 positions are modified to phosphoserine: Ser-84 and Ser-95. The segment covering 103–114 (VPMGPIIVPPGG) has biased composition (low complexity). At Arg-305 the chain carries Asymmetric dimethylarginine. Positions 321–403 (ERMSGLSAER…REKELLAAKA (83 aa)) form a coiled coil. Disordered stretches follow at residues 324–385 (SGLS…EREL) and 418–465 (RGHA…HHTV). Residues 331-385 (LQMDEELRREREREREREREREADREREKEREREREKEREQEKEREREKEREREL) are compositionally biased toward basic and acidic residues. Thr-433 bears the Phosphothreonine mark. The segment covering 450–465 (PVQHPLHPVPTPHHTV) has biased composition (low complexity). Lys-496 is modified (N6-acetyllysine). Disordered regions lie at residues 526–579 (HLDM…QLHA), 633–675 (KAEE…GPFL), and 699–720 (FGEL…PRAP). Basic and acidic residues-rich tracts occupy residues 551-561 (NRHEPGGRDPP) and 633-645 (KAEE…EPAP). Residues 711–720 (PYRPPVPRAP) are compositionally biased toward pro residues. N6-acetyllysine is present on Lys-739. Ser-766 carries the phosphoserine modification. Disordered stretches follow at residues 807–858 (KEEL…NNSP), 903–930 (ADSL…SLDV), 948–981 (EPGK…EAPG), and 1068–1122 (LQSS…PKRK). Residues 813–822 (QKRRKRRRML) show a composition bias toward basic residues. Phosphoserine occurs at positions 826 and 828. Polar residues-rich tracts occupy residues 831-840 (TIQSKRQTPS) and 847-858 (TRYSPDEMNNSP). Ser-857 bears the Phosphoserine mark. Thr-907 is subject to Phosphothreonine. Ser-909 bears the Phosphoserine mark. Polar residues predominate over residues 1068–1085 (LQSSSRAPPPQHNGQQEP). The segment covering 1099–1117 (RDSEEEEEEDDEDGEDEEE) has biased composition (acidic residues). Position 1101 is a phosphoserine (Ser-1101). A coiled-coil region spans residues 1127-1201 (EAVFEAYQEH…ELDHLRKCLA (75 aa)).

In terms of assembly, may be a component of a BHC histone deacetylase complex that contains HDAC1, HDAC2, HMG20B/BRAF35, KDM1A, RCOR1/CoREST, PHF21A/BHC80, ZMYM2, ZNF217, ZMYM3, GSE1 and GTF2I.

This chain is Genetic suppressor element 1 (GSE1), found in Homo sapiens (Human).